The chain runs to 141 residues: Sigma factor binding protein 2, chloroplastic (141 aa).

Positions 1–20 (MDQSSSTLLINQRKSSSSPT) are enriched in polar residues. The segment at 1 to 36 (MDQSSSTLLINQRKSSSSPTRIPPKQKRKSTTTHKP) is disordered. The transit peptide at 1–38 (MDQSSSTLLINQRKSSSSPTRIPPKQKRKSTTTHKPIK) directs the protein to the chloroplast. Positions 13 to 29 (RKSSSSPTRIPPKQKRK) match the Bipartite nuclear localization signal motif. The span at 24–36 (PKQKRKSTTTHKP) shows a compositional bias: basic residues. The VQ motif lies at 55–64 (FRELVQELTG).

Interacts with sigma factors in chloroplast. Interacts with WRKY33 in the nucleus.

Its subcellular location is the plastid. The protein resides in the chloroplast. The protein localises to the nucleus. In terms of biological role, functions as activator of WRKY33 in plant defense against necrotrophic pathogens by stimulating the DNA-binding activity of WRKY33. In Arabidopsis thaliana (Mouse-ear cress), this protein is Sigma factor binding protein 2, chloroplastic (SIB2).